The sequence spans 783 residues: BMP/retinoic acid-inducible neural-specific protein 2 (783 aa).

An N-terminal signal peptide occupies residues 1 to 33; sequence MRWQCGTRFRGLRPAVAPWTALLALGLPGWVLA. The MACPF domain occupies 85 to 281; that stretch reads RYRIYREFAR…FVAAALSYIT (197 aa). 6 N-linked (GlcNAc...) asparagine glycosylation sites follow: Asn185, Asn354, Asn473, Asn579, Asn626, and Asn658.

Belongs to the BRINP family.

Its subcellular location is the secreted. Inhibits neuronal cell proliferation by negative regulation of the cell cycle transition. This Homo sapiens (Human) protein is BMP/retinoic acid-inducible neural-specific protein 2 (BRINP2).